Here is a 176-residue protein sequence, read N- to C-terminus: Large ribosomal subunit protein bL17m (176 aa).

The transit peptide at 1-8 directs the protein to the mitochondrion; that stretch reads MRLSLAAA.

This sequence belongs to the bacterial ribosomal protein bL17 family. As to quaternary structure, component of the mitochondrial ribosome large subunit (39S) which comprises a 16S rRNA and about 50 distinct proteins.

The protein localises to the mitochondrion. This chain is Large ribosomal subunit protein bL17m (Mrpl17), found in Rattus norvegicus (Rat).